The primary structure comprises 635 residues: Extracellular metalloproteinase 1 (635 aa).

The signal sequence occupies residues 1–19; it reads MHGLLLAAGLLSLPLHVLA. Positions 20–246 are excised as a propeptide; that stretch reads HPQPSTSTSL…VHNVVDYVAH (227 aa). Residue Asn287 is glycosylated (N-linked (GlcNAc...) asparagine). His430 serves as a coordination point for Zn(2+). The active site involves Glu431. His434 contributes to the Zn(2+) binding site. N-linked (GlcNAc...) asparagine glycosylation is found at Asn475, Asn594, and Asn623.

This sequence belongs to the peptidase M36 family. The cofactor is Zn(2+).

The protein localises to the secreted. In terms of biological role, secreted metalloproteinase probably acting as a virulence factor. The protein is Extracellular metalloproteinase 1 (MEP1) of Trichophyton rubrum (Athlete's foot fungus).